Reading from the N-terminus, the 158-residue chain is Ribosome-binding factor A (158 aa).

The disordered stretch occupies residues 130 to 158; it reads TAQYAGDADPYKHDDEAEAEGDEFESDEE. Residues 145-158 are compositionally biased toward acidic residues; the sequence is EAEAEGDEFESDEE.

This sequence belongs to the RbfA family. In terms of assembly, monomer. Binds 30S ribosomal subunits, but not 50S ribosomal subunits or 70S ribosomes.

The protein resides in the cytoplasm. Functionally, one of several proteins that assist in the late maturation steps of the functional core of the 30S ribosomal subunit. Associates with free 30S ribosomal subunits (but not with 30S subunits that are part of 70S ribosomes or polysomes). Required for efficient processing of 16S rRNA. May interact with the 5'-terminal helix region of 16S rRNA. In Bifidobacterium longum subsp. infantis (strain ATCC 15697 / DSM 20088 / JCM 1222 / NCTC 11817 / S12), this protein is Ribosome-binding factor A.